We begin with the raw amino-acid sequence, 355 residues long: Peptide chain release factor 1 (355 aa).

Position 233 is an N5-methylglutamine (Gln233). The segment covering 283 to 293 has biased composition (basic and acidic residues); sequence EKNKDRADARK. The disordered stretch occupies residues 283 to 304; that stretch reads EKNKDRADARKSQVGTGDRSER.

This sequence belongs to the prokaryotic/mitochondrial release factor family. Post-translationally, methylated by PrmC. Methylation increases the termination efficiency of RF1.

It is found in the cytoplasm. Its function is as follows. Peptide chain release factor 1 directs the termination of translation in response to the peptide chain termination codons UAG and UAA. This chain is Peptide chain release factor 1, found in Finegoldia magna (strain ATCC 29328 / DSM 20472 / WAL 2508) (Peptostreptococcus magnus).